The primary structure comprises 660 residues: Dual specificity mitogen-activated protein kinase kinase 1 (660 aa).

The span at 1 to 57 (MNTNTNTNTNISSSGNNIINTPTTNNNNKNNNNNNNNNNNSNNSNNNSSNNNNNNNN) shows a compositional bias: low complexity. Disordered regions lie at residues 1 to 60 (MNTN…NAVG), 105 to 169 (KGES…FNNL), and 204 to 229 (NNNYNNYNNNNNSNNNNNNYNNSNNN). K105 participates in a covalent cross-link: Glycyl lysine isopeptide (Lys-Gly) (interchain with G-Cter in SUMO). Polar residues predominate over residues 123–148 (LHSNLNPQLLASPTSSESMDFNQGFY). Residues 149 to 169 (NNNNNNNNNNNNNNLNNFNNL) are compositionally biased toward low complexity. Residues 292-641 (LKIIRVLGRG…ASNLLNHEFV (350 aa)) form the Protein kinase domain. Residues 298–306 (LGRGAGGVV) and K321 contribute to the ATP site. The active-site Proton acceptor is D414. Disordered regions lie at residues 491 to 510 (SNLPHQQQQPLQQQQQQQQQ) and 539 to 573 (NNSNNNIRNSNNNNNNNNNNNNNNNNNNNNNVLDI). Low complexity-rich tracts occupy residues 496 to 510 (QQQQPLQQQQQQQQQ) and 539 to 569 (NNSNNNIRNSNNNNNNNNNNNNNNNNNNNNN).

This sequence belongs to the protein kinase superfamily. STE Ser/Thr protein kinase family. MAP kinase kinase subfamily. In terms of assembly, interacts with mip1. The cofactor is Mg(2+). In terms of processing, sumoylated and ubiquitinated in response to chemoattractant stimulation. Sumoylation is linked to kinase activation and results in translocation.

It is found in the cytoplasm. It localises to the nucleus. It carries out the reaction L-seryl-[protein] + ATP = O-phospho-L-seryl-[protein] + ADP + H(+). The catalysed reaction is L-threonyl-[protein] + ATP = O-phospho-L-threonyl-[protein] + ADP + H(+). It catalyses the reaction L-tyrosyl-[protein] + ATP = O-phospho-L-tyrosyl-[protein] + ADP + H(+). Required for cAMP-mediated activation of guanylyl cyclase activity and plays an essential role in aggregation, morphogenesis, and chemotaxis. Appears to act upstream of erk1 but not erk2. This chain is Dual specificity mitogen-activated protein kinase kinase 1, found in Dictyostelium discoideum (Social amoeba).